The following is a 212-amino-acid chain: Protein GrpE (212 aa).

The interval 1–69 (MAEMSNNKTS…LESAKKEIES (69 aa)) is disordered. Low complexity predominate over residues 40–60 (ETTQTESMETAETETSLQTEL).

It belongs to the GrpE family. As to quaternary structure, homodimer.

It localises to the cytoplasm. In terms of biological role, participates actively in the response to hyperosmotic and heat shock by preventing the aggregation of stress-denatured proteins, in association with DnaK and GrpE. It is the nucleotide exchange factor for DnaK and may function as a thermosensor. Unfolded proteins bind initially to DnaJ; upon interaction with the DnaJ-bound protein, DnaK hydrolyzes its bound ATP, resulting in the formation of a stable complex. GrpE releases ADP from DnaK; ATP binding to DnaK triggers the release of the substrate protein, thus completing the reaction cycle. Several rounds of ATP-dependent interactions between DnaJ, DnaK and GrpE are required for fully efficient folding. This Leptospira interrogans serogroup Icterohaemorrhagiae serovar Lai (strain 56601) protein is Protein GrpE.